Here is a 6298-residue protein sequence, read N- to C-terminus: Adhesion G-protein coupled receptor V1 (6298 aa).

An N-terminal signal peptide occupies residues 1 to 28 (MSVTSEPGMISSFLLVYLSTLFISFVFG). Calx-beta domains lie at 29–116 (EAEI…FHLT), 132–236 (ASVT…IQLR), 251–362 (VEII…IMLL), 389–489 (YGVL…LTIL), 646–746 (PAIA…TLSL), 764–862 (DLII…VILS), 877–980 (VNIT…IILL), 994–1094 (ASLR…IVLF), 1108–1208 (ATVI…LRLV), 1440–1540 (AMPR…FLLK), 1562–1662 (QKSD…VTLV), 1706–1805 (TGLP…VELL), 1846–1948 (ILVT…VSIL), 1962–2075 (TLTI…IELF), 2103–2202 (HLVI…VQLL), 2218–2320 (VITI…VQLA), 2437–2537 (TLCL…FLIS), 2576–2672 (FIIY…VRLG), 2687–2786 (VTVN…VVLY), 2810–2921 (LTVE…VNLT), 2945–3044 (QIVI…LLLT), and 3067–3167 (DGPG…VCTL). Topologically, residues 29–5901 (EAEIRFTGQT…TDNSSSYNEA (5873 aa)) are extracellular. 6 EAR repeats span residues 3251-3292 (VFSI…RWQG), 3293-3341 (TFVP…MLTA), 3344-3389 (RLVL…RWNG), 3391-3435 (NFAW…TWSG), 3437-3484 (QFIN…VWEM), and 3488-3530 (SLRY…CWNS). Calx-beta domains follow at residues 3581–3622 (QSDF…RVQL), 3636–3736 (SVRV…VVTL), 3772–3872 (GAVR…VTIA), 3919–4003 (GGVI…ISLV), 4017–4120 (VNVV…IELT), 4135–4235 (SVII…EFQL), 4251–4351 (ARIT…LAIT), 4384–4484 (RIII…ILLI), 4507–4607 (SPFG…IVQL), 4628–4728 (KFGD…AVQL), 4989–5089 (TTAE…INLT), 5281–5325 (AVEE…YVFL), and 5361–5461 (IGFS…FVEL). Residues 5740–5896 (SILALHWNPQ…AVYAQTDNSS (157 aa)) enclose the GAIN-B domain. 2 disulfide bridges follow: Cys-5849-Cys-5878 and Cys-5866-Cys-5880. Residues 5849-5896 (CLLWNQAAASWLSDSQFCKVVEDASDYVECACSHMSVYAVYAQTDNSS) are GPS. Residues 5902–5922 (FFSAGLICISGLCLAVVSHMF) traverse the membrane as a helical segment. Topologically, residues 5923-5932 (CARHSMFAAK) are cytoplasmic. Residues 5933–5953 (LLTHMMVASLGTQILFLASAY) traverse the membrane as a helical segment. The Extracellular segment spans residues 5954 to 5973 (ASPHLSEESCSAVAAVAHYL). A helical membrane pass occupies residues 5974 to 5994 (YLCQFSWMLIQSVNFWYVLVV). The Cytoplasmic segment spans residues 5995-6003 (SDEHTERRC). Residues 6004–6024 (LLFCLLSWGLPSFVVILLILI) traverse the membrane as a helical segment. Topologically, residues 6025 to 6052 (LRGIYHRSMPQIYGLIHGDLCFIPNIYA) are extracellular. Residues 6053–6073 (ALFTAALVPLMCLVVVFVVFI) traverse the membrane as a helical segment. Topologically, residues 6074-6097 (HAYQLKPQWKGYDDVFRGRTNAAE) are cytoplasmic. A helical membrane pass occupies residues 6098 to 6118 (IPLILYLFALISMTWLWGGLH). Residues 6119-6126 (MAYGHFWM) are Extracellular-facing. Residues 6127-6147 (LVLFVIFNSLQGLYVFVVYFI) form a helical membrane-spanning segment. Topologically, residues 6148–6298 (LHNQTCCPMK…RRIPIADTHL (151 aa)) are cytoplasmic. Disordered regions lie at residues 6206 to 6242 (ERSSFQQTSQASPDLKTSPQNGASFPSSGGYGPGSLI) and 6264 to 6283 (SVSDNESGQGSQEGGTLTDS). Composition is skewed to polar residues over residues 6208–6226 (SSFQQTSQASPDLKTSPQN) and 6265–6283 (VSDNESGQGSQEGGTLTDS).

This sequence belongs to the G-protein coupled receptor 2 family. Adhesion G-protein coupled receptor (ADGR) subfamily. As to quaternary structure, forms a heterodimer, consisting of a large extracellular region (alpha subunit) non-covalently linked to a seven-transmembrane moiety (beta subunit). Interacts (via the cytoplasmic region) with PDZD7. Component of USH2 complex, composed of ADGRV1, PDZD7, USH2A and WHRN. Interacts with USH2A and WHRN. Interacts (via the cytoplasmic region) with MYO7A (via MyTH4-FERM domains). In terms of processing, autoproteolytically cleaved into 2 subunits, an extracellular alpha subunit and a seven-transmembrane subunit. Expressed by oligodendrocytes. In midbrain, enriched in the myelinated regions of the superior and inferior colliculi. In the cochlea, expressed in developing hair cells. Expressed by photoreceptors in the retina.

It is found in the cell membrane. Its subcellular location is the cell projection. The protein resides in the stereocilium membrane. It localises to the photoreceptor inner segment. The protein localises to the secreted. In terms of biological role, G-protein coupled receptor which has an essential role in the development of hearing and vision. Couples to G-alpha(i)-proteins, GNAI1/2/3, G-alpha(q)-proteins, GNAQ, as well as G-alpha(s)-proteins, GNAS, inhibiting adenylate cyclase (AC) activity and cAMP production. Required for the hair bundle ankle formation, which connects growing stereocilia in developing cochlear hair cells of the inner ear. In response to extracellular calcium, activates kinases PKA and PKC to regulate myelination by inhibiting the ubiquitination of MAG, thus enhancing the stability of this protein in myelin-forming cells of the auditory pathway. In retina photoreceptors, the USH2 complex is required for the maintenance of periciliary membrane complex that seems to play a role in regulating intracellular protein transport. Involved in the regulation of bone metabolism. Cleaved ADGRV1 beta-subunit couples with G-alpha(i)-proteins, GNAI1/2/3, and constitutively inhibits adenylate cyclase (AC) activity with a stronger effect than full ADGRV1. This chain is Adhesion G-protein coupled receptor V1, found in Mus musculus (Mouse).